We begin with the raw amino-acid sequence, 304 residues long: Ornithine carbamoyltransferase (304 aa).

Residues 51–54 (STRT), Gln78, Arg102, and 129–132 (HPVQ) each bind carbamoyl phosphate. L-ornithine contacts are provided by residues Asn157, Asp221, and 225–226 (SM). Carbamoyl phosphate is bound by residues 261–262 (CL) and Arg289.

The protein belongs to the aspartate/ornithine carbamoyltransferase superfamily. OTCase family.

It is found in the cytoplasm. It carries out the reaction carbamoyl phosphate + L-ornithine = L-citrulline + phosphate + H(+). It functions in the pathway amino-acid degradation; L-arginine degradation via ADI pathway; carbamoyl phosphate from L-arginine: step 2/2. Functionally, reversibly catalyzes the transfer of the carbamoyl group from carbamoyl phosphate (CP) to the N(epsilon) atom of ornithine (ORN) to produce L-citrulline. This Campylobacter curvus (strain 525.92) protein is Ornithine carbamoyltransferase.